A 139-amino-acid chain; its full sequence is Self-incompatibility protein S1 (139 aa).

The N-terminal stretch at 1 to 19 (MNIFYVIVLLSFFLSKSSG) is a signal peptide. Asn-51 is a glycosylation site (N-linked (GlcNAc...) asparagine).

Belongs to the plant self-incompatibility (S1) protein family. Glycosylated (S1b) and unglocosylated (S1a) forms coexist. Accumulates in the stigma (at protein level).

Its subcellular location is the secreted. Functionally, exhibits specific pollen self-inhibitory activity thus preventing self-fertilization. The polypeptide is Self-incompatibility protein S1 (Papaver rhoeas (Common poppy)).